A 218-amino-acid chain; its full sequence is Probable transaldolase 2 (218 aa).

K83 (schiff-base intermediate with substrate) is an active-site residue.

It belongs to the transaldolase family. Type 3B subfamily.

The protein resides in the cytoplasm. It catalyses the reaction D-sedoheptulose 7-phosphate + D-glyceraldehyde 3-phosphate = D-erythrose 4-phosphate + beta-D-fructose 6-phosphate. Its pathway is carbohydrate degradation; pentose phosphate pathway; D-glyceraldehyde 3-phosphate and beta-D-fructose 6-phosphate from D-ribose 5-phosphate and D-xylulose 5-phosphate (non-oxidative stage): step 2/3. Its function is as follows. Transaldolase is important for the balance of metabolites in the pentose-phosphate pathway. This is Probable transaldolase 2 from Listeria innocua serovar 6a (strain ATCC BAA-680 / CLIP 11262).